Consider the following 963-residue polypeptide: Transcription factor cbf12 (963 aa).

2 disordered regions span residues 130–207 (NPSN…SQGL) and 248–289 (VNMN…PPQK). Polar residues-rich tracts occupy residues 143 to 207 (FENN…SQGL) and 249 to 289 (NMNS…PPQK).

Belongs to the Su(H) family.

It localises to the nucleus. In terms of biological role, transcription factor which function may be to trigger the increase of adhesion at stationary phase, possibly by counteracting or replacing cbf11 at the respective promoters. May also play a cbf11-antagonistic role in the regulation of a number of other important processes such as extracellular material production, colony morphogenesis, ploidy maintenance, or meiosis. The protein is Transcription factor cbf12 (cbf12) of Schizosaccharomyces pombe (strain 972 / ATCC 24843) (Fission yeast).